We begin with the raw amino-acid sequence, 926 residues long: MSTNPNPGIHQYAPSTLPREREREGATNSPQRNLLEFLCICVACIVCYYNSTQCGLVFDDISAIRDNKDLRPHTPLINVFLNDFWGTPMRKEQSHKSYRPLTVLTFRFNYLLHALEPFGYHLVNLLLHLSVCLLWRRVCRLLLRQCAASGSNAISAPSSSSVSQLNTCAFVASLLFAVHPVHTEAVTGVVGRAELLSSICFLAAFLSYAKSVGDSGCPRRTNWLTLFGCFGSCLLASMLCKEQGITIAGICVVYELFVVHQLRPLHLCHFVLRLFDERTEQQSPKLANPSGIRRWSSSTLWKRLSFLVGITLTLLVGRVYVMGSQLPIFTRFDNPASAADTPERQLTYGYLIYLNCWLLLCPSLLCCDWTMGTVPLLQGFTDSRNITTLLTFLALGAMVAKTCFTRNLALSRTLIMCLGWMVLPFLPASNLFFPVGFVVAERILYMPSMGYCLLVAYGFEQLQRRGSLSWQRFSQAALAILLLTHALKTHQRNLDWRTEYSLFMSGVHVNQRNAKLYNNVGHALENEGKFEEALLYFQQAVRIQTDDIGAHINVGRTFNNLKRYAEAEQAYVQAKALFPQAKPGVSYHARIAPNHLNVFINLANLIAKNQTRLEEADHLYRQAISMRSDYVQAYINRGDILMKLNRTAQAQEVYEQALLYDNENADIYYNLGVVFLEQGKSQQAQVYFNKAIELYPEHEQALLNSAILLQELGGEEARRVSRSRLYKVLENDDQNEKVYFNLGMLAMDESSFDEAEQFFKRAIHLKADFRSALFNLALLLADTKRPLDAVPFLNQLIRHHPSHVKGLILLGDIYINHMKDLDEAEKCYRSILHYDPHNTQGLHNLCVVFVERKRLAKAAACLQYAQRLAPAEDYIGRHLQIVLARLQKINKLPESAPERKLAYEDYDPLEFKLPQDRPTHKSRKRS.

The interval 1-26 (MSTNPNPGIHQYAPSTLPREREREGA) is disordered. Residues 1 to 36 (MSTNPNPGIHQYAPSTLPREREREGATNSPQRNLLE) lie on the Cytoplasmic side of the membrane. The helical transmembrane segment at 37 to 57 (FLCICVACIVCYYNSTQCGLV) threads the bilayer. Residues 58–114 (FDDISAIRDNKDLRPHTPLINVFLNDFWGTPMRKEQSHKSYRPLTVLTFRFNYLLHA) are Extracellular-facing. Residues 115 to 135 (LEPFGYHLVNLLLHLSVCLLW) form a helical membrane-spanning segment. Residues 136–169 (RRVCRLLLRQCAASGSNAISAPSSSSVSQLNTCA) lie on the Cytoplasmic side of the membrane. A helical transmembrane segment spans residues 170-190 (FVASLLFAVHPVHTEAVTGVV). Over 191–192 (GR) the chain is Extracellular. Residues 193-213 (AELLSSICFLAAFLSYAKSVG) traverse the membrane as a helical segment. Topologically, residues 214-222 (DSGCPRRTN) are cytoplasmic. Transmembrane regions (helical) follow at residues 223–239 (WLTL…ASML) and 240–259 (CKEQ…LFVV). Over 260 to 303 (HQLRPLHLCHFVLRLFDERTEQQSPKLANPSGIRRWSSSTLWKR) the chain is Cytoplasmic. A helical membrane pass occupies residues 304 to 324 (LSFLVGITLTLLVGRVYVMGS). The Extracellular segment spans residues 325 to 345 (QLPIFTRFDNPASAADTPERQ). Residues 346–366 (LTYGYLIYLNCWLLLCPSLLC) form a helical membrane-spanning segment. At 367–384 (CDWTMGTVPLLQGFTDSR) the chain is on the cytoplasmic side. A helical membrane pass occupies residues 385-405 (NITTLLTFLALGAMVAKTCFT). At 406 to 419 (RNLALSRTLIMCLG) the chain is on the extracellular side. The helical transmembrane segment at 420 to 440 (WMVLPFLPASNLFFPVGFVVA) threads the bilayer. The Cytoplasmic segment spans residues 441-442 (ER). The chain crosses the membrane as a helical span at residues 443–463 (ILYMPSMGYCLLVAYGFEQLQ). Residues 464-926 (RRGSLSWQRF…RPTHKSRKRS (463 aa)) are Extracellular-facing. TPR repeat units follow at residues 514–547 (AKLY…QTDD), 548–581 (IGAH…FPQA), 596–630 (LNVF…RSDY), 631–664 (VQAY…DNEN), 665–698 (ADIY…YPEH), 736–769 (EKVY…KADF), 770–803 (RSAL…HPSH), 805–838 (KGLI…DPHN), and 839–872 (TQGL…APAE). Asn-609 and Asn-645 each carry an N-linked (GlcNAc...) asparagine glycan.

This sequence belongs to the TMTC family.

It is found in the membrane. It localises to the endoplasmic reticulum. The catalysed reaction is a di-trans,poly-cis-dolichyl beta-D-mannosyl phosphate + L-seryl-[protein] = 3-O-(alpha-D-mannosyl)-L-seryl-[protein] + a di-trans,poly-cis-dolichyl phosphate + H(+). The enzyme catalyses a di-trans,poly-cis-dolichyl beta-D-mannosyl phosphate + L-threonyl-[protein] = 3-O-(alpha-D-mannosyl)-L-threonyl-[protein] + a di-trans,poly-cis-dolichyl phosphate + H(+). It participates in protein modification; protein glycosylation. Functionally, transfers mannosyl residues to the hydroxyl group of serine or threonine residues. The protein is Protein O-mannosyl-transferase Tmtc3 of Drosophila melanogaster (Fruit fly).